The chain runs to 512 residues: Probable pectinesterase/pectinesterase inhibitor 54 (512 aa).

Positions 1 to 24 (MGVIDMVLFWVLLVNALLIVDASS) are cleaved as a signal peptide. The interval 29 to 193 (FAYQNEMQRH…SRLVSNSLTL (165 aa)) is pectinesterase inhibitor 54. 2 N-linked (GlcNAc...) asparagine glycosylation sites follow: Asn-71 and Asn-131. Positions 229 to 496 (HVVVAKDGSG…FSVVKRRNGE (268 aa)) are pectinesterase 54. Gln-302 is a substrate binding site. The active-site Proton donor; for pectinesterase activity is the Asp-325. A disulfide bridge links Cys-339 with Cys-359. The Nucleophile; for pectinesterase activity role is filled by Asp-346. The substrate site is built by Arg-415 and Trp-417.

The protein in the N-terminal section; belongs to the PMEI family. In the C-terminal section; belongs to the pectinesterase family. Expressed in siliques.

It is found in the secreted. The protein localises to the cell wall. It catalyses the reaction [(1-&gt;4)-alpha-D-galacturonosyl methyl ester](n) + n H2O = [(1-&gt;4)-alpha-D-galacturonosyl](n) + n methanol + n H(+). The protein operates within glycan metabolism; pectin degradation; 2-dehydro-3-deoxy-D-gluconate from pectin: step 1/5. Functionally, acts in the modification of cell walls via demethylesterification of cell wall pectin. This is Probable pectinesterase/pectinesterase inhibitor 54 (PME54) from Arabidopsis thaliana (Mouse-ear cress).